The primary structure comprises 338 residues: Glycerol-3-phosphate dehydrogenase [NAD(P)+] (338 aa).

NADPH is bound by residues Trp11, Arg30, and Lys107. Residues Lys107, Gly140, and Ser142 each contribute to the sn-glycerol 3-phosphate site. Ala144 is an NADPH binding site. Residues Lys195, Asp248, Ser258, Arg259, and Asn260 each coordinate sn-glycerol 3-phosphate. The active-site Proton acceptor is Lys195. Residue Arg259 participates in NADPH binding. 2 residues coordinate NADPH: Val283 and Glu285.

The protein belongs to the NAD-dependent glycerol-3-phosphate dehydrogenase family.

The protein resides in the cytoplasm. The enzyme catalyses sn-glycerol 3-phosphate + NAD(+) = dihydroxyacetone phosphate + NADH + H(+). It carries out the reaction sn-glycerol 3-phosphate + NADP(+) = dihydroxyacetone phosphate + NADPH + H(+). The protein operates within membrane lipid metabolism; glycerophospholipid metabolism. Functionally, catalyzes the reduction of the glycolytic intermediate dihydroxyacetone phosphate (DHAP) to sn-glycerol 3-phosphate (G3P), the key precursor for phospholipid synthesis. In Ralstonia nicotianae (strain ATCC BAA-1114 / GMI1000) (Ralstonia solanacearum), this protein is Glycerol-3-phosphate dehydrogenase [NAD(P)+].